A 218-amino-acid chain; its full sequence is Ribonuclease HII (218 aa).

The RNase H type-2 domain occupies 24-218 (ESIAGVDEVG…KLFAVNGSLT (195 aa)). A divalent metal cation-binding residues include D30, E31, and D126.

It belongs to the RNase HII family. Requires Mn(2+) as cofactor. Mg(2+) serves as cofactor.

It is found in the cytoplasm. It carries out the reaction Endonucleolytic cleavage to 5'-phosphomonoester.. In terms of biological role, endonuclease that specifically degrades the RNA of RNA-DNA hybrids. This is Ribonuclease HII from Prochlorococcus marinus (strain MIT 9313).